We begin with the raw amino-acid sequence, 165 residues long: Chemotaxis protein CheW (165 aa).

The protein belongs to the CheW family.

Its function is as follows. Plays an essential role in chemotaxis signal transduction system in order to colonize the host stomach. This Helicobacter pylori (strain ATCC 700392 / 26695) (Campylobacter pylori) protein is Chemotaxis protein CheW.